We begin with the raw amino-acid sequence, 260 residues long: Cystine transporter (260 aa).

In terms of domain architecture, PQ-loop 1 spans 1–67 (MVSLDDILGI…QLYCWKMTGD (67 aa)). 5 helical membrane-spanning segments follow: residues 7–28 (ILGI…ITNW), 40–62 (FVML…LYCW), 81–102 (FWYC…VAGA), 118–138 (WYLR…VQFM), and 151–175 (TLAY…PQVT). The region spanning 162 to 212 (KISMSLIKYIPQVTHNSTRKSMDCFPIQGVFLDVTGGIASLLQLIWQLSND) is the PQ-loop 2 domain. Residue Asn177 is glycosylated (N-linked (GlcNAc...) asparagine). The next 2 helical transmembrane spans lie at 185-205 (CFPI…LLQL) and 227-247 (VGLS…WFVY).

This sequence belongs to the cystinosin family.

It localises to the endosome membrane. The protein resides in the vacuole membrane. It carries out the reaction L-cystine(out) + H(+)(out) = L-cystine(in) + H(+)(in). Cystine/H(+) symporter that mediates export of cystine, the oxidized dimer of cysteine, from vacuoles/endodomes. This is Cystine transporter (ERS1) from Saccharomyces cerevisiae (strain ATCC 204508 / S288c) (Baker's yeast).